Consider the following 577-residue polypeptide: General transcription factor IIF subunit 1 (577 aa).

A disordered region spans residues 1-36; sequence MSSASKSTPSAASGSSTSAAAAAAASVASGSASSSA. 4 positions are modified to phosphoserine: Ser-183, Ser-246, Ser-250, and Ser-252. The disordered stretch occupies residues 236-508; that stretch reads KITDMDEWID…TSLPTSFSGG (273 aa). Residues 240–256 are compositionally biased toward acidic residues; sequence MDEWIDSEDESDSEDEE. Over residues 257 to 271 the composition is skewed to basic and acidic residues; the sequence is DKKKKEQEDSDDGKA. Over residues 272-285 the composition is skewed to basic residues; sequence KGKGKKGADKKKKK. A compositionally biased stretch (acidic residues) spans 289–304; it reads DDEAFEESDDGDEEGR. Residues 319–341 show a composition bias toward basic and acidic residues; the sequence is PEAKVDKDMKGVAEEDALRKLLT. Thr-341 carries the post-translational modification Phosphothreonine. Phosphoserine occurs at positions 342, 352, and 355. A compositionally biased stretch (basic and acidic residues) spans 362-376; that stretch reads GEKKKKDKGKDEVSK. Positions 392 to 406 are enriched in low complexity; it reads SNGSGDSSTDFSSDS. The span at 423–437 shows a compositional bias: basic and acidic residues; the sequence is VVKDKDKEKEKEKES. The segment covering 438–456 has biased composition (low complexity); sequence AASSKVIASSSNANKSRSA. Ser-453 and Ser-455 each carry phosphoserine. Phosphothreonine is present on Thr-457. Composition is skewed to polar residues over residues 471–489 and 496–506; these read SLPS…TSTP and EISTSLPTSFS. Ser-482 and Ser-484 each carry phosphoserine. Thr-488 carries the phosphothreonine modification.

This sequence belongs to the TFIIF alpha subunit family. Heterodimer of an alpha and a beta subunit. Post-translationally, phosphorylated on Ser and other residues by TAF1 and casein kinase II-like kinases.

The protein resides in the nucleus. Its function is as follows. TFIIF is a general transcription initiation factor that binds to RNA polymerase II and helps to recruit it to the initiation complex in collaboration with TFIIB. It promotes transcription elongation. In Drosophila melanogaster (Fruit fly), this protein is General transcription factor IIF subunit 1.